Reading from the N-terminus, the 265-residue chain is Serine protease harobin (265 aa).

The N-terminal stretch at 1 to 18 (MPLIRVLASLLILQLSYG) is a signal peptide. Positions 19–33 (KSLDNGAKAITSLDR) are excised as a propeptide. The 224-residue stretch at 34 to 257 (IIGGFECNPS…YKDWIEGIIA (224 aa)) folds into the Peptidase S1 domain. 7 cysteine pairs are disulfide-bonded: Cys-40-Cys-172, Cys-59-Cys-75, Cys-106-Cys-152, Cys-107-Cys-264, Cys-151-Cys-218, Cys-183-Cys-197, and Cys-208-Cys-233. The active-site Charge relay system is His-74. Residue Asn-112 is glycosylated (N-linked (GlcNAc...) asparagine). Asp-119 acts as the Charge relay system in catalysis. N-linked (GlcNAc...) asparagine glycosylation is present at Asn-130. The active-site Charge relay system is Ser-212.

It belongs to the peptidase S1 family. Snake venom subfamily. As to quaternary structure, monomer. Harobin contains three additional Cys residues than other snake venom serine proteases, suggesting an additional disulfide bond. In addition, it is more stable than other snake 6-disulfide-bond serine proteases, since it is less sensitive to DTT. Expressed by the venom gland.

The protein localises to the secreted. Inhibited by PMSF. In terms of biological role, serine protein with fibrinolytic and fibrinogenolytic activities. Degrades Bbeta-chain (FGB) of fibrinogen first and then the Aalpha-chain (FGA). Gamma-chain (FGG) are also digested on prolonged incubation. In vitro, it cleaves high molecular weight (HMW) kininogen (KNG) releasing bradykinin that promotes vasodilation. In vitro and in vivo, it cleaves angiotensin-2 (AGT). This explains the reduction of blood pressure in hypertensive rats. Also has antithrombotic effects on thrombosis animal models. The chain is Serine protease harobin from Hydrophis hardwickii (Hardwick's spine-bellied seasnake).